Here is a 295-residue protein sequence, read N- to C-terminus: Pantothenate synthetase (295 aa).

30–37 (MGNLHDGH) provides a ligand contact to ATP. Residue His37 is the Proton donor of the active site. Gln61 provides a ligand contact to (R)-pantoate. Residue Gln61 participates in beta-alanine binding. Residue 149–152 (GEKD) coordinates ATP. Gln155 is a (R)-pantoate binding site. Residues Val178 and 186–189 (MSSR) contribute to the ATP site.

Belongs to the pantothenate synthetase family. In terms of assembly, homodimer.

The protein localises to the cytoplasm. The catalysed reaction is (R)-pantoate + beta-alanine + ATP = (R)-pantothenate + AMP + diphosphate + H(+). It functions in the pathway cofactor biosynthesis; (R)-pantothenate biosynthesis; (R)-pantothenate from (R)-pantoate and beta-alanine: step 1/1. Its function is as follows. Catalyzes the condensation of pantoate with beta-alanine in an ATP-dependent reaction via a pantoyl-adenylate intermediate. In Photobacterium profundum (strain SS9), this protein is Pantothenate synthetase.